The primary structure comprises 874 residues: MKSAEIREAFLRFFEEKGHTRVASSSLIPANDPTLLFTNAGMNQFKDCFLGLEKRAYTRATTSQKCVRAGGKHNDLENVGYTARHHTFFEMLGNFSFGDYFKRDAIHYAWEFLTGEKWLNLPKEKLWVTVYATDDEAYDIWTKEVGVPAERMVRIGDNKGAPYASDNFWAMGDTGPCGPCTEIFFDHGPDIWGGPPGSPEEDGDRYIEIWNNVFMQFNRTADGVMHPLPAPSVDTGMGLERVSAVLQHVHSNYEIDLFQNLLKASAEAIGCANDDAPSLKVVADHIRSCSFLIADGVLPSNEGRGYVLRRIIRRACRHGNKLGARGTFFHKIVAALVAEMGDAFPELKQQQAHIERVLKTEEEQFAKTLEQGLKILEQDLAELQGSVIPGNVVFKLYDTYGFPVDLTNDIARERELTIDEDGFEREMEAQRERARASSAFGMDYNSLVKVDGETRFLGYQGVSGAGQIVALFRDGQAVERLEEGEEGVVVLDQTPFYAESGGQVGDSGYLEAAGVRFDVRDTTKAGGAHLHHGVVAEGGLSVGAAVKAEVDASVRQATALNHSATHLLHAALRQVLGDHVQQKGSLVDSQRLRFDFSHFEAIKPEQLKALEDIVNAEIRRNTEVETEETDIDTAKAKGAMALFGEKYGDQVRVLSMGGDFSVELCGGTHVSRTGDIGLFKITSEGGVAAGVRRIEAVTGAAALAYLNGAEEQLKEAAGLVKGSRDNLLDKLGALLERNRSLEKELEQLKAKAASAAGDDLSAAAVDIKGAKVLAARLDGLDGKALLALVDQLKNKLGRAVILLGGELDGKVVLVAGVTQDLTGQLKAGELMKQAAAAVGGKGGGRPDMAQGGGTDAAKLDEALALAQRFVEQGL.

His562, His566, Cys665, and His669 together coordinate Zn(2+).

It belongs to the class-II aminoacyl-tRNA synthetase family. Requires Zn(2+) as cofactor.

The protein localises to the cytoplasm. The catalysed reaction is tRNA(Ala) + L-alanine + ATP = L-alanyl-tRNA(Ala) + AMP + diphosphate. Its function is as follows. Catalyzes the attachment of alanine to tRNA(Ala) in a two-step reaction: alanine is first activated by ATP to form Ala-AMP and then transferred to the acceptor end of tRNA(Ala). Also edits incorrectly charged Ser-tRNA(Ala) and Gly-tRNA(Ala) via its editing domain. In Pseudomonas paraeruginosa (strain DSM 24068 / PA7) (Pseudomonas aeruginosa (strain PA7)), this protein is Alanine--tRNA ligase.